The chain runs to 233 residues: Nickel import system ATP-binding protein NikE (233 aa).

One can recognise an ABC transporter domain in the interval 2 to 228 (IELKHVTFGY…DRHPYTKELV (227 aa)). 35–42 (GESGCGKS) contributes to the ATP binding site.

This sequence belongs to the ABC transporter superfamily. The complex is composed of two ATP-binding proteins (NikD and NikE), two transmembrane proteins (NikB and NikC) and a solute-binding protein (NikA).

The protein resides in the cell membrane. It carries out the reaction Ni(2+)(out) + ATP + H2O = Ni(2+)(in) + ADP + phosphate + H(+). In terms of biological role, part of the ABC transporter complex NikABCDE (Opp2) involved in nickel import. Probably responsible for energy coupling to the transport system. This chain is Nickel import system ATP-binding protein NikE, found in Staphylococcus aureus (strain Mu50 / ATCC 700699).